The primary structure comprises 209 residues: MSGSSERELASIVRDLGCGPTFWAPTTQRFPGFLAGDKLACAIVNTAGRETGGVHWLAFGWNPRSRTCYMFDPFGFSDRRLKQIYSFEYEAMLRRSAVASSPDRCLSLEQSTQTVQGPDSAACGLFCCMFLHAFVHWPDRPMDGNPTMNLLTGVPNGMLQSPQVLPTLRRNQEELYRFLARHSPYFRSHRAAIEHATAFDKMKQLRVSQ.

Catalysis depends on residues His55, Asp72, and Cys123.

Belongs to the peptidase C5 family. Interacts with protease cofactor pVI-C; this interaction is necessary for protease activation.

It localises to the virion. Its subcellular location is the host nucleus. The catalysed reaction is Cleaves proteins of the adenovirus and its host cell at two consensus sites: -Yaa-Xaa-Gly-Gly-|-Xaa- and -Yaa-Xaa-Gly-Xaa-|-Gly- (in which Yaa is Met, Ile or Leu, and Xaa is any amino acid).. Requires DNA and protease cofactor for maximal activation. Inside nascent virions, becomes partially activated by binding to the viral DNA, allowing it to cleave the cofactor that binds to the protease and fully activates it. Actin, like the viral protease cofactor, seems to act as a cofactor in the cleavage of cytokeratin 18 and of actin itself. In terms of biological role, cleaves viral precursor proteins (pTP, pIIIa, pVI, pVII, pVIII, and pX) inside newly assembled particles giving rise to mature virions. Protease complexed to its cofactor slides along the viral DNA to specifically locate and cleave the viral precursors. Mature virions have a weakened organization compared to the unmature virions, thereby facilitating subsequent uncoating. Without maturation, the particle lacks infectivity and is unable to uncoat. Late in adenovirus infection, in the cytoplasm, may participate in the cytoskeleton destruction. Cleaves host cell cytoskeletal keratins K7 and K18. This is Protease from Human adenovirus D serotype 17 (HAdV-17).